The following is a 431-amino-acid chain: Glutamate-1-semialdehyde 2,1-aminomutase (431 aa).

K269 bears the N6-(pyridoxal phosphate)lysine mark.

The protein belongs to the class-III pyridoxal-phosphate-dependent aminotransferase family. HemL subfamily. In terms of assembly, homodimer. Requires pyridoxal 5'-phosphate as cofactor.

It localises to the cytoplasm. It carries out the reaction (S)-4-amino-5-oxopentanoate = 5-aminolevulinate. It functions in the pathway porphyrin-containing compound metabolism; protoporphyrin-IX biosynthesis; 5-aminolevulinate from L-glutamyl-tRNA(Glu): step 2/2. The protein operates within porphyrin-containing compound metabolism; chlorophyll biosynthesis. This chain is Glutamate-1-semialdehyde 2,1-aminomutase, found in Chlorobium phaeobacteroides (strain BS1).